The sequence spans 350 residues: 4-hydroxy-3-methylbut-2-en-1-yl diphosphate synthase (flavodoxin) (350 aa).

[4Fe-4S] cluster is bound by residues C263, C266, C298, and E305.

The protein belongs to the IspG family. [4Fe-4S] cluster serves as cofactor.

It carries out the reaction (2E)-4-hydroxy-3-methylbut-2-enyl diphosphate + oxidized [flavodoxin] + H2O + 2 H(+) = 2-C-methyl-D-erythritol 2,4-cyclic diphosphate + reduced [flavodoxin]. It functions in the pathway isoprenoid biosynthesis; isopentenyl diphosphate biosynthesis via DXP pathway; isopentenyl diphosphate from 1-deoxy-D-xylulose 5-phosphate: step 5/6. In terms of biological role, converts 2C-methyl-D-erythritol 2,4-cyclodiphosphate (ME-2,4cPP) into 1-hydroxy-2-methyl-2-(E)-butenyl 4-diphosphate. The polypeptide is 4-hydroxy-3-methylbut-2-en-1-yl diphosphate synthase (flavodoxin) (Nautilia profundicola (strain ATCC BAA-1463 / DSM 18972 / AmH)).